Here is a 150-residue protein sequence, read N- to C-terminus: MFRGVANLNLDTKGRMAMPSRYRDRLVETCEGRLVITVDRDGCLLVYPQPEWERIEQALMSRPNMDRQVRRLQRLLVGHATECELDGQGRILLPPPLRDYAGLDKRVVLVGQGNKFELWDEDTWVKSRDEWFKEEDETAEPSAVLESLSL.

2 SpoVT-AbrB domains span residues 5–51 (VANL…PQPE) and 80–123 (ATEC…DEDT).

Belongs to the MraZ family. Forms oligomers.

The protein resides in the cytoplasm. It localises to the nucleoid. The polypeptide is Transcriptional regulator MraZ (Thioalkalivibrio sulfidiphilus (strain HL-EbGR7)).